The sequence spans 354 residues: Uroporphyrinogen decarboxylase (354 aa).

Substrate-binding positions include 27-31 (RQAGR), Asp-77, Tyr-154, Thr-209, and His-327.

Belongs to the uroporphyrinogen decarboxylase family. In terms of assembly, homodimer.

It is found in the cytoplasm. The catalysed reaction is uroporphyrinogen III + 4 H(+) = coproporphyrinogen III + 4 CO2. Its pathway is porphyrin-containing compound metabolism; protoporphyrin-IX biosynthesis; coproporphyrinogen-III from 5-aminolevulinate: step 4/4. Functionally, catalyzes the decarboxylation of four acetate groups of uroporphyrinogen-III to yield coproporphyrinogen-III. The polypeptide is Uroporphyrinogen decarboxylase (Klebsiella pneumoniae subsp. pneumoniae (strain ATCC 700721 / MGH 78578)).